The primary structure comprises 357 residues: 3-dehydroquinate synthase (357 aa).

Residues 69–74 (DGEQFK), 103–107 (GVVGD), 127–128 (TT), Lys-140, Lys-149, and 167–170 (CLQT) contribute to the NAD(+) site. 3 residues coordinate Zn(2+): Glu-182, His-245, and His-262.

The protein belongs to the sugar phosphate cyclases superfamily. Dehydroquinate synthase family. Co(2+) is required as a cofactor. Requires Zn(2+) as cofactor. NAD(+) serves as cofactor.

The protein localises to the cytoplasm. It catalyses the reaction 7-phospho-2-dehydro-3-deoxy-D-arabino-heptonate = 3-dehydroquinate + phosphate. Its pathway is metabolic intermediate biosynthesis; chorismate biosynthesis; chorismate from D-erythrose 4-phosphate and phosphoenolpyruvate: step 2/7. Its function is as follows. Catalyzes the conversion of 3-deoxy-D-arabino-heptulosonate 7-phosphate (DAHP) to dehydroquinate (DHQ). This Idiomarina loihiensis (strain ATCC BAA-735 / DSM 15497 / L2-TR) protein is 3-dehydroquinate synthase.